A 121-amino-acid polypeptide reads, in one-letter code: MSRVKRGVTARARHKKVLNQAKGYYGARSRVYRVAKQAVIKAGQYAYRDRKVKKRTFRSLWIVRINAAARQHDISYSQLINGLNKAGVELDRKALAELAVYNKDAFAAVVEKAKAALAYII.

The protein belongs to the bacterial ribosomal protein bL20 family.

Its function is as follows. Binds directly to 23S ribosomal RNA and is necessary for the in vitro assembly process of the 50S ribosomal subunit. It is not involved in the protein synthesizing functions of that subunit. This Francisella tularensis subsp. mediasiatica (strain FSC147) protein is Large ribosomal subunit protein bL20.